The chain runs to 248 residues: Triosephosphate isomerase (248 aa).

Substrate is bound at residue 9–11; the sequence is NWK. H94 functions as the Electrophile in the catalytic mechanism. E166 functions as the Proton acceptor in the catalytic mechanism. Residues G172, S211, and 232–233 contribute to the substrate site; that span reads GG.

It belongs to the triosephosphate isomerase family. As to quaternary structure, homodimer.

Its subcellular location is the cytoplasm. It catalyses the reaction D-glyceraldehyde 3-phosphate = dihydroxyacetone phosphate. The protein operates within carbohydrate biosynthesis; gluconeogenesis. It participates in carbohydrate degradation; glycolysis; D-glyceraldehyde 3-phosphate from glycerone phosphate: step 1/1. Functionally, involved in the gluconeogenesis. Catalyzes stereospecifically the conversion of dihydroxyacetone phosphate (DHAP) to D-glyceraldehyde-3-phosphate (G3P). This Ruthia magnifica subsp. Calyptogena magnifica protein is Triosephosphate isomerase.